Consider the following 217-residue polypeptide: Urease accessory protein UreE (217 aa).

The segment at 148 to 217 is disordered; sequence AYGEAAAHGH…DHDHGSGHHH (70 aa). Positions 160–171 are enriched in basic and acidic residues; that stretch reads AGHDHAHDHDHG. A compositionally biased stretch (low complexity) spans 193–202; it reads AAAPAPHVHG. The span at 206-217 shows a compositional bias: basic and acidic residues; that stretch reads GHDHDHGSGHHH.

Belongs to the UreE family.

The protein resides in the cytoplasm. In terms of biological role, involved in urease metallocenter assembly. Binds nickel. Probably functions as a nickel donor during metallocenter assembly. The protein is Urease accessory protein UreE of Methylibium petroleiphilum (strain ATCC BAA-1232 / LMG 22953 / PM1).